Consider the following 216-residue polypeptide: Adenylate kinase (216 aa).

13-18 (GAGKGT) contributes to the ATP binding site. The segment at 33–66 (TTGDALRANKTKDITHLDVEYDTPGAYMDAGELV) is NMP. AMP-binding positions include Thr-34, Arg-39, 64–66 (ELV), 89–92 (GYPR), and Gln-96. An LID region spans residues 125-162 (GRRVCEDCGATFHVSFNQPETEGVCDACGGSLYQREDD). Residue Arg-126 participates in ATP binding. Zn(2+) is bound by residues Cys-129 and Cys-132. 135–136 (TF) contacts ATP. Residues Cys-149 and Cys-152 each coordinate Zn(2+). The AMP site is built by Arg-159 and Arg-170. Residue Arg-198 participates in ATP binding.

It belongs to the adenylate kinase family. Monomer.

It localises to the cytoplasm. The enzyme catalyses AMP + ATP = 2 ADP. The protein operates within purine metabolism; AMP biosynthesis via salvage pathway; AMP from ADP: step 1/1. Catalyzes the reversible transfer of the terminal phosphate group between ATP and AMP. Plays an important role in cellular energy homeostasis and in adenine nucleotide metabolism. The polypeptide is Adenylate kinase (Halobacterium salinarum (strain ATCC 700922 / JCM 11081 / NRC-1) (Halobacterium halobium)).